An 81-amino-acid chain; its full sequence is Bursicon (81 aa).

As to quaternary structure, heterodimer of burs and pburs. In terms of tissue distribution, central nervous system. Coexpressed with CCAP in most CCAP-specific neurons. Coexpressed with pburs in the large bilateral lateral neurosecretory neurons of the first three unfused abdominal ganglia and in all anterior bilateral cell pairs in the thoracic ganglia.

The protein resides in the secreted. Its function is as follows. Final heterodimeric neurohormone released at the end of the molting cycle, involved in the sclerotization (tanning) of the insect cuticle, melanization and wing spreading. The polypeptide is Bursicon (burs) (Periplaneta americana (American cockroach)).